Here is a 594-residue protein sequence, read N- to C-terminus: MGGIIKLSFLFCSLISLVNSENTGKLPTAISDHSVPKATATTDPSVFVLSNDFEITDVPTTREYTFNLTEALASPDGYERLVYAVNNMLPGPVIEANTGDTVIVHVNNYLHEGQGIHWHGLRQNGTALMDGVPGITQCSIPPGGSFTYQFTVSHQSGTFWWHSHYSNSMADGIWGPLIVHSPNEPLQRGRDYDEDRIVAVTDWMHDESETIVEALISSEGYRGRPFPPQGDAILINGRGQTNCTATGSPSCTYPPPPEIHVPVNCRVRLRFISAASHPMYRISIDNHSMEIVETDGTAVYGPTIHEISISSGERYSVIINTTEGKEGDAFWLRTSVALDCMAQGVTQVGLAVVRYTGNGSITTAEPRTEAWTDLARPDTPCVGLDEMYHLSPRELVNASQTALESRVLDSKLGKFVDVYGNSFEGYGFNNVTYQNQINDPLLYVVQRGGTCNSSLIANATFADIGPVNIIINNLDSHIGHPYHMHGTEFQLMGRGTGALTLDDLPNTNLTLDNPTRKDTIWMQGGSWALLRIISDNPGVWALHCHIGWHLAKGKMAVVVVQPEAIKKIQWPESWMDLCANTDPNAFGPARRSVS.

A signal peptide spans 1–20; the sequence is MGGIIKLSFLFCSLISLVNS. N67 carries an N-linked (GlcNAc...) asparagine glycan. Plastocyanin-like domains lie at 70-183 and 195-357; these read EALA…HSPN and DRIV…RYTG. H117 and H119 together coordinate Cu cation. N124 is a glycosylation site (N-linked (GlcNAc...) asparagine). A disulfide bridge connects residues C138 and C578. Residues H162 and H164 each contribute to the Cu cation site. 8 N-linked (GlcNAc...) asparagine glycosylation sites follow: N242, N286, N320, N358, N397, N430, N452, and N458. The Plastocyanin-like 3 domain maps to 466 to 563; the sequence is PVNIIINNLD…KMAVVVVQPE (98 aa). Cu cation-binding residues include H480, H483, and H485. An N-linked (GlcNAc...) asparagine glycan is attached at N508. Cu cation contacts are provided by H543, C544, H545, and H549.

It belongs to the multicopper oxidase family. Cu cation is required as a cofactor.

Its subcellular location is the secreted. The protein localises to the cell wall. It carries out the reaction 4 hydroquinone + O2 = 4 benzosemiquinone + 2 H2O. Its function is as follows. Laccase that catalyzes the oxidation of certain aromatic compounds, including L-dopa, to quinones, which then polymerize to melanin. Able to oxidize a wide variety of aromatic diphenol and diamino groups in the ortho, meta, and para positions but not monophenolic groups such as in phenol, tyramine, or tyrosine. Plays an important role in virulence. Plays a role in dissemination to extrapulmonary sites but is not involved in pulmonary growth or in elicitation of cellular immune responses in the lung. This is Laccase-2 (LAC2) from Cryptococcus neoformans var. grubii serotype A (strain H99 / ATCC 208821 / CBS 10515 / FGSC 9487) (Filobasidiella neoformans var. grubii).